We begin with the raw amino-acid sequence, 352 residues long: Replication factor C subunit 5 (352 aa).

This sequence belongs to the activator 1 small subunits family. As to quaternary structure, heteropentamer of subunits rfc1, rfc2, rfc3, rfc4 and rfc5 that forms a complex with PCNA in the presence of ATP.

The protein resides in the nucleus. The elongation of primed DNA templates by DNA polymerase delta and epsilon requires the action of the accessory proteins proliferating cell nuclear antigen (PCNA) and activator 1. This Neurospora crassa (strain ATCC 24698 / 74-OR23-1A / CBS 708.71 / DSM 1257 / FGSC 987) protein is Replication factor C subunit 5.